Consider the following 195-residue polypeptide: Erythropoietin (195 aa).

The N-terminal stretch at methionine 1 to glycine 28 is a signal peptide. 2 disulfide bridges follow: cysteine 35–cysteine 190 and cysteine 57–cysteine 61. The N-linked (GlcNAc...) asparagine glycan is linked to asparagine 52. N-linked (GlcNAc...) asparagine glycans are attached at residues asparagine 66 and asparagine 111.

Belongs to the EPO/TPO family.

The protein localises to the secreted. Its function is as follows. Hormone involved in the regulation of erythrocyte proliferation and differentiation and the maintenance of a physiological level of circulating erythrocyte mass. Binds to EPOR leading to EPOR dimerization and JAK2 activation thereby activating specific downstream effectors, including STAT1 and STAT3. In Oryctolagus cuniculus (Rabbit), this protein is Erythropoietin (EPO).